The sequence spans 277 residues: Putative phosphoenolpyruvate synthase regulatory protein (277 aa).

157–164 (GVSRCGKT) provides a ligand contact to ADP.

It belongs to the pyruvate, phosphate/water dikinase regulatory protein family. PSRP subfamily.

It catalyses the reaction [pyruvate, water dikinase] + ADP = [pyruvate, water dikinase]-phosphate + AMP + H(+). The enzyme catalyses [pyruvate, water dikinase]-phosphate + phosphate + H(+) = [pyruvate, water dikinase] + diphosphate. In terms of biological role, bifunctional serine/threonine kinase and phosphorylase involved in the regulation of the phosphoenolpyruvate synthase (PEPS) by catalyzing its phosphorylation/dephosphorylation. The sequence is that of Putative phosphoenolpyruvate synthase regulatory protein from Cronobacter sakazakii (strain ATCC BAA-894) (Enterobacter sakazakii).